Here is a 206-residue protein sequence, read N- to C-terminus: Small ribosomal subunit protein uS4 (206 aa).

In terms of domain architecture, S4 RNA-binding spans 96–156 (CRLDNVVYRM…EKSKNQLRIA (61 aa)).

Belongs to the universal ribosomal protein uS4 family. As to quaternary structure, part of the 30S ribosomal subunit. Contacts protein S5. The interaction surface between S4 and S5 is involved in control of translational fidelity.

In terms of biological role, one of the primary rRNA binding proteins, it binds directly to 16S rRNA where it nucleates assembly of the body of the 30S subunit. Functionally, with S5 and S12 plays an important role in translational accuracy. The sequence is that of Small ribosomal subunit protein uS4 from Ectopseudomonas mendocina (strain ymp) (Pseudomonas mendocina).